A 174-amino-acid chain; its full sequence is RNA pyrophosphohydrolase (174 aa).

In terms of domain architecture, Nudix hydrolase spans 6–149 (GFRANVGIII…KRDVYRKVMK (144 aa)). Positions 38–59 (GGVDEGESAEQAMYRELYEEVG) match the Nudix box motif.

It belongs to the Nudix hydrolase family. RppH subfamily. It depends on a divalent metal cation as a cofactor.

In terms of biological role, accelerates the degradation of transcripts by removing pyrophosphate from the 5'-end of triphosphorylated RNA, leading to a more labile monophosphorylated state that can stimulate subsequent ribonuclease cleavage. This Shewanella loihica (strain ATCC BAA-1088 / PV-4) protein is RNA pyrophosphohydrolase.